A 528-amino-acid polypeptide reads, in one-letter code: NAC domain-containing protein 13 (528 aa).

Residues 10–160 (LAPGFRFHPT…AYVLYKIYKK (151 aa)) form the NAC domain. A DNA-binding region spans residues 107–166 (VGEKKTLVFHRGRAPNGERTNWVMHEYTLHKEELKRCGGEDVKDAYVLYKIYKKSGSGPK). Residues 388 to 419 (EAPGTGDSSEFLNPVPSGISTTNEDDPSKDES) are disordered. The chain crosses the membrane as a helical span at residues 499 to 519 (FFCLSIIGALCALFWVIIGTM).

Interacts with RCD1. In terms of tissue distribution, expressed in roots, rosette leaves, shoot apex, stems and flowers.

The protein resides in the endoplasmic reticulum membrane. It is found in the nucleus. Its function is as follows. Transcriptional activator activated by proteolytic cleavage through regulated intramembrane proteolysis (RIP). Involved in oxidative stress tolerance by mediating regulation of mitochondrial retrograde signaling during mitochondrial dysfunction. Interacts directly with the mitochondrial dysfunction DNA consensus motif 5'-CTTGNNNNNCA[AC]G-3', a cis-regulatory elements of several mitochondrial retrograde regulation-induced genes, and triggers increased oxidative stress tolerance. This chain is NAC domain-containing protein 13, found in Arabidopsis thaliana (Mouse-ear cress).